A 221-amino-acid polypeptide reads, in one-letter code: Octanoyltransferase (221 aa).

Residues 14–202 form the BPL/LPL catalytic domain; sequence GVRPDTLWFL…MLGARNAPHP (189 aa). Substrate is bound by residues 54 to 61, 128 to 130, and 141 to 143; these read RGGLLTYH, SIG, and GFA. Cysteine 159 acts as the Acyl-thioester intermediate in catalysis. The disordered stretch occupies residues 197 to 221; that stretch reads RNAPHPPAPNLSSGDLGTGTRAGRT.

The protein belongs to the LipB family.

The protein localises to the cytoplasm. The enzyme catalyses octanoyl-[ACP] + L-lysyl-[protein] = N(6)-octanoyl-L-lysyl-[protein] + holo-[ACP] + H(+). Its pathway is protein modification; protein lipoylation via endogenous pathway; protein N(6)-(lipoyl)lysine from octanoyl-[acyl-carrier-protein]: step 1/2. In terms of biological role, catalyzes the transfer of endogenously produced octanoic acid from octanoyl-acyl-carrier-protein onto the lipoyl domains of lipoate-dependent enzymes. Lipoyl-ACP can also act as a substrate although octanoyl-ACP is likely to be the physiological substrate. The sequence is that of Octanoyltransferase from Frankia casuarinae (strain DSM 45818 / CECT 9043 / HFP020203 / CcI3).